Here is a 714-residue protein sequence, read N- to C-terminus: Polyribonucleotide nucleotidyltransferase (714 aa).

Mg(2+) is bound by residues aspartate 489 and aspartate 495. The KH domain occupies 556-615 (PKIDTIKIDVDKIKVVIGKGGETIDKIIAETGVKIDIDEEGNVSIYSSDQDAINRAKEII). The S1 motif domain occupies 625-693 (GEVYHAKVVR…DKGRIDASMK (69 aa)). The tract at residues 691–714 (SMKALVPRPPKPEKSEAKKEGKHD) is disordered. The span at 700 to 714 (PKPEKSEAKKEGKHD) shows a compositional bias: basic and acidic residues.

The protein belongs to the polyribonucleotide nucleotidyltransferase family. It depends on Mg(2+) as a cofactor.

It is found in the cytoplasm. It catalyses the reaction RNA(n+1) + phosphate = RNA(n) + a ribonucleoside 5'-diphosphate. Involved in mRNA degradation. Catalyzes the phosphorolysis of single-stranded polyribonucleotides processively in the 3'- to 5'-direction. In Streptococcus equi subsp. zooepidemicus (strain MGCS10565), this protein is Polyribonucleotide nucleotidyltransferase.